A 236-amino-acid chain; its full sequence is RNA-binding protein 24 (236 aa).

An RRM domain is found at 11–88 (TKIFVGGLPY…RKANVNLAYL (78 aa)). Residues 175 to 199 (QYPYAASPAAAGYVTTGGYSYAVQQ) are necessary for interaction with EIF4E.

Interacts with EIF4E; this interaction prevents EIF4E from binding to p53/TP53 mRNA and inhibits the assembly of translation initiation complex. Expressed strongly in heart and skeletal muscles. Weakly expressed in intestine, aorta, liver, lung, kidney, uterus and bladder.

Its subcellular location is the nucleus. The protein localises to the cytoplasm. Functionally, multifunctional RNA-binding protein involved in the regulation of pre-mRNA splicing, mRNA stability and mRNA translation important for cell fate decision and differentiation. Plays a major role in pre-mRNA alternative splicing regulation. Mediates preferentially muscle-specific exon inclusion in numerous mRNAs important for striated cardiac and skeletal muscle cell differentiation. Binds to intronic splicing enhancer (ISE) composed of stretches of GU-rich motifs localized in flanking intron of exon that will be included by alternative splicing. Involved in embryonic stem cell (ESC) transition to cardiac cell differentiation by promoting pre-mRNA alternative splicing events of several pluripotency and/or differentiation genes. Plays a role in the regulation of mRNA stability. Binds to 3'-untranslated region (UTR) AU-rich elements in target transcripts, such as CDKN1A and MYOG, leading to maintain their stabilities. Involved in myogenic differentiation by regulating MYOG levels. Binds to multiple regions in the mRNA 3'-UTR of TP63, hence inducing its destabilization. Also promotes the destabilization of the CHRM2 mRNA via its binding to a region in the coding sequence. Plays a role in the regulation of mRNA translation. Mediates repression of p53/TP53 mRNA translation through its binding to U-rich element in the 3'-UTR, hence preventing EIF4E from binding to p53/TP53 mRNA and translation initiation. Binds to a huge amount of mRNAs. Required for embryonic heart development, sarcomer and M-band formation in striated muscles. Together with RBM20, promotes the expression of short isoforms of PDLIM5/ENH in cardiomyocytes. The polypeptide is RNA-binding protein 24 (Mus musculus (Mouse)).